The following is a 408-amino-acid chain: UPF0761 membrane protein azo3165 (408 aa).

Transmembrane regions (helical) follow at residues 29-49 (LAFT…GVFG), 92-112 (LTLI…ATIE), 131-151 (ITVS…SVVA), 172-192 (IAAA…LYYA), 197-217 (PVRL…FLLM), 220-240 (GLGL…TFAA), and 241-261 (LPIF…GALI).

The protein belongs to the UPF0761 family.

The protein resides in the cell inner membrane. In Azoarcus sp. (strain BH72), this protein is UPF0761 membrane protein azo3165.